We begin with the raw amino-acid sequence, 1159 residues long: Cation channel sperm-associated auxiliary subunit gamma (1159 aa).

The signal sequence occupies residues M1–L35. Over W36–R1065 the chain is Extracellular. 2 cysteine pairs are disulfide-bonded: C44-C105 and C159-C165. The N-linked (GlcNAc...) asparagine glycan is linked to N102. The N-linked (GlcNAc...) asparagine glycan is linked to N177. A disulfide bridge connects residues C288 and C343. N355 carries an N-linked (GlcNAc...) asparagine glycan. Cysteines 394 and 402 form a disulfide. N-linked (GlcNAc...) asparagine glycosylation is found at N426 and N574. 5 disulfides stabilise this stretch: C638–C860, C806–C834, C882–C1046, C909–C918, and C1010–C1016. The helical transmembrane segment at A1066–F1087 threads the bilayer. Topologically, residues C1088–T1159 are cytoplasmic. The segment at F1138–T1159 is disordered. Positions M1142 to T1159 are enriched in basic and acidic residues.

The protein belongs to the CATSPERG family. As to quaternary structure, component of the CatSper complex or CatSpermasome composed of the core pore-forming members CATSPER1, CATSPER2, CATSPER3 and CATSPER4 as well as auxiliary members CATSPERB, CATSPERG, CATSPERD, CATSPERE, CATSPERZ, SCLO6C1, TMEM249, TMEM262 and EFCAB9. HSPA1 may be an additional auxiliary complex member. The core complex members CATSPER1, CATSPER2, CATSPER3 and CATSPER4 form a heterotetrameric channel. The auxiliary CATSPERB, CATSPERG, CATSPERD and CATSPERE subunits form a pavilion-like structure over the pore which stabilizes the complex through interactions with CATSPER4, CATSPER3, CATSPER1 and CATSPER2 respectively. TMEM262/CATSPERH interacts with CATSPERB, further stabilizing the complex. C2CD6/CATSPERT interacts at least with CATSPERD and is required for targeting the CatSper complex in the flagellar membrane.

It localises to the cell projection. It is found in the cilium. Its subcellular location is the flagellum membrane. In terms of biological role, auxiliary component of the CatSper complex, a complex involved in sperm cell hyperactivation. Sperm cell hyperactivation is needed for sperm motility which is essential late in the preparation of sperm for fertilization. The chain is Cation channel sperm-associated auxiliary subunit gamma from Macaca fascicularis (Crab-eating macaque).